Reading from the N-terminus, the 333-residue chain is MGKNITVLGAGAWGTAFGQVLADAGNTVTMWAKEQRIVEDIRDRHHNAVRLPSVEKLPDNMTATGDRAEAVKNADIVVVAIAAQFARVALVEFKGLIPDHAIVVSLMKGIERGTNKRMDEVVRESLDLPADRFAAISGPNLSKEIADRHPAATVVACTNLDNATKVAEACTTSYFKPFVTTDVIGLEMCGSLKNVTALAVGMARGAGYGENTAAMIETRGLAELTALGAAAGADPKTFFGLAGVGDLIATCGSPLSRNYTFGANLGKGLTVEEATKVSNGVAEGVPTTDAVVALGEQLDVPTPLAYQMSRVLNEGISCSEMLAGLFGHEVTGE.

Residues Trp-13, Lys-33, and Lys-108 each contribute to the NADPH site. Residues Lys-108 and Gly-138 each contribute to the sn-glycerol 3-phosphate site. Ser-142 is an NADPH binding site. 5 residues coordinate sn-glycerol 3-phosphate: Lys-193, Asp-246, Ser-256, Arg-257, and Asn-258. The active-site Proton acceptor is Lys-193. Residue Arg-257 participates in NADPH binding. NADPH-binding residues include Val-281 and Glu-283.

The protein belongs to the NAD-dependent glycerol-3-phosphate dehydrogenase family.

Its subcellular location is the cytoplasm. The enzyme catalyses sn-glycerol 3-phosphate + NAD(+) = dihydroxyacetone phosphate + NADH + H(+). The catalysed reaction is sn-glycerol 3-phosphate + NADP(+) = dihydroxyacetone phosphate + NADPH + H(+). Its pathway is membrane lipid metabolism; glycerophospholipid metabolism. Catalyzes the reduction of the glycolytic intermediate dihydroxyacetone phosphate (DHAP) to sn-glycerol 3-phosphate (G3P), the key precursor for phospholipid synthesis. This Bifidobacterium longum subsp. infantis (strain ATCC 15697 / DSM 20088 / JCM 1222 / NCTC 11817 / S12) protein is Glycerol-3-phosphate dehydrogenase [NAD(P)+].